A 309-amino-acid chain; its full sequence is Aspartate carbamoyltransferase catalytic subunit (309 aa).

Arg-58 and Thr-59 together coordinate carbamoyl phosphate. L-aspartate is bound at residue Lys-86. Carbamoyl phosphate contacts are provided by Arg-108, His-136, and Gln-139. Residues Arg-169 and Arg-223 each coordinate L-aspartate. 2 residues coordinate carbamoyl phosphate: Gly-264 and Pro-265.

Belongs to the aspartate/ornithine carbamoyltransferase superfamily. ATCase family. In terms of assembly, heterododecamer (2C3:3R2) of six catalytic PyrB chains organized as two trimers (C3), and six regulatory PyrI chains organized as three dimers (R2).

The enzyme catalyses carbamoyl phosphate + L-aspartate = N-carbamoyl-L-aspartate + phosphate + H(+). Its pathway is pyrimidine metabolism; UMP biosynthesis via de novo pathway; (S)-dihydroorotate from bicarbonate: step 2/3. Functionally, catalyzes the condensation of carbamoyl phosphate and aspartate to form carbamoyl aspartate and inorganic phosphate, the committed step in the de novo pyrimidine nucleotide biosynthesis pathway. The chain is Aspartate carbamoyltransferase catalytic subunit from Pelotomaculum thermopropionicum (strain DSM 13744 / JCM 10971 / SI).